Consider the following 71-residue polypeptide: Protein MMP24OS (71 aa).

The segment covering 1-10 (MGAQLSGGRG) has biased composition (gly residues). The tract at residues 1–61 (MGAQLSGGRG…PSPWGPLDDV (61 aa)) is disordered. The segment covering 36 to 55 (HPPQPQPQPQPQPQPEPSPW) has biased composition (pro residues).

The polypeptide is Protein MMP24OS (Homo sapiens (Human)).